A 362-amino-acid chain; its full sequence is Innexin-17 (362 aa).

Helical transmembrane passes span 27-47 (YFTV…QYVG), 101-121 (WVPF…VIWN), 189-209 (FLAT…MGLG), and 266-286 (LFIA…FDIF).

This sequence belongs to the pannexin family.

Its subcellular location is the cell membrane. The protein resides in the cell junction. The protein localises to the gap junction. Its function is as follows. Structural component of the gap junctions. This is Innexin-17 from Caenorhabditis elegans.